We begin with the raw amino-acid sequence, 473 residues long: 3-isopropylmalate dehydratase large subunit (473 aa).

Positions 351, 414, and 417 each coordinate [4Fe-4S] cluster.

The protein belongs to the aconitase/IPM isomerase family. LeuC type 1 subfamily. Heterodimer of LeuC and LeuD. [4Fe-4S] cluster is required as a cofactor.

It catalyses the reaction (2R,3S)-3-isopropylmalate = (2S)-2-isopropylmalate. It functions in the pathway amino-acid biosynthesis; L-leucine biosynthesis; L-leucine from 3-methyl-2-oxobutanoate: step 2/4. In terms of biological role, catalyzes the isomerization between 2-isopropylmalate and 3-isopropylmalate, via the formation of 2-isopropylmaleate. The chain is 3-isopropylmalate dehydratase large subunit from Acidovorax ebreus (strain TPSY) (Diaphorobacter sp. (strain TPSY)).